The chain runs to 680 residues: Cytosolic endo-beta-N-acetylglucosaminidase 1 (680 aa).

A compositionally biased stretch (pro residues) spans 1–15 (MSVAPPAPSPPPFDP). Positions 1 to 21 (MSVAPPAPSPPPFDPTKPSTP) are disordered.

The protein belongs to the glycosyl hydrolase 85 family.

Its subcellular location is the cytoplasm. It is found in the cytosol. It carries out the reaction an N(4)-(oligosaccharide-(1-&gt;3)-[oligosaccharide-(1-&gt;6)]-beta-D-Man-(1-&gt;4)-beta-D-GlcNAc-(1-&gt;4)-alpha-D-GlcNAc)-L-asparaginyl-[protein] + H2O = an oligosaccharide-(1-&gt;3)-[oligosaccharide-(1-&gt;6)]-beta-D-Man-(1-&gt;4)-D-GlcNAc + N(4)-(N-acetyl-beta-D-glucosaminyl)-L-asparaginyl-[protein]. Its function is as follows. Endoglycosidase that releases N-glycans from glycoproteins by cleaving the beta-1,4-glycosidic bond in the N,N'-diacetylchitobiose core. Involved in the production of high-mannose type N-glycans during plant development and fruit maturation. The polypeptide is Cytosolic endo-beta-N-acetylglucosaminidase 1 (Arabidopsis thaliana (Mouse-ear cress)).